The primary structure comprises 142 residues: Coactosin-like protein (142 aa).

At Ala-2 the chain carries N-acetylalanine. The ADF-H domain occupies 2–130 (ATKIDKEACR…EEDFIKSELK (129 aa)). The segment at 66 to 75 (TGDAMSKRSK) is flexible and important for F-actin binding. An N6-acetyllysine mark is found at Lys-102 and Lys-126.

Belongs to the actin-binding proteins ADF family. Coactosin subfamily. In terms of assembly, interacts with 5-lipoxygenase (ALOX5/5LO) in a calcium-independent manner. Binds to F-actin with a stoichiometry of 1:2. In terms of tissue distribution, widely expressed with highest levels in placenta, lung, kidney and peripheral blood leukocytes and lower levels in brain, liver and pancreas.

Its subcellular location is the cytoplasm. It localises to the cytoskeleton. The protein localises to the nucleus. Binds to F-actin in a calcium-independent manner. Has no direct effect on actin depolymerization. Acts as a chaperone for ALOX5 (5LO), influencing both its stability and activity in leukotrienes synthesis. The sequence is that of Coactosin-like protein (COTL1) from Homo sapiens (Human).